The sequence spans 495 residues: Type-1 histone deacetylase 1 (495 aa).

Position 94 (Asp-94) interacts with substrate. The active-site Proton acceptor is the His-136. Gly-144 is a substrate binding site. Asp-171, His-173, and Asp-259 together coordinate a divalent metal cation. Tyr-298 contributes to the substrate binding site. A disordered region spans residues 372-495; that stretch reads PAAAHHDIPP…EDADVDMDSG (124 aa). Basic and acidic residues predominate over residues 396–413; it reads DVRISEADRDKKVHHQGE. Over residues 425–443 the composition is skewed to polar residues; the sequence is NYSNGLEATSTSRRNQVSI. The segment covering 454–480 has biased composition (low complexity); that stretch reads NSRNNNNNNNNNNNNNNNNNNNSNNNN.

It belongs to the histone deacetylase family. HD type 1 subfamily.

It is found in the nucleus. Its subcellular location is the cytoplasm. The catalysed reaction is N(6)-acetyl-L-lysyl-[histone] + H2O = L-lysyl-[histone] + acetate. Functionally, responsible for the deacetylation of lysine residues on the N-terminal part of the core histones (H2A, H2B, H3 and H4). Histone deacetylation plays an important role in transcriptional regulation, cell cycle progression and developmental events. Histone deacetylases act via the formation of large multiprotein complexes. This Dictyostelium discoideum (Social amoeba) protein is Type-1 histone deacetylase 1 (hdaA).